Consider the following 121-residue polypeptide: Small ribosomal subunit protein uS13 (121 aa).

Positions 93–121 (RGLPVRGQNTKNNARTRKGKATAIAGKKK) are disordered. Residues 106–121 (ARTRKGKATAIAGKKK) show a composition bias toward basic residues.

This sequence belongs to the universal ribosomal protein uS13 family. As to quaternary structure, part of the 30S ribosomal subunit. Forms a loose heterodimer with protein S19. Forms two bridges to the 50S subunit in the 70S ribosome.

Located at the top of the head of the 30S subunit, it contacts several helices of the 16S rRNA. In the 70S ribosome it contacts the 23S rRNA (bridge B1a) and protein L5 of the 50S subunit (bridge B1b), connecting the 2 subunits; these bridges are implicated in subunit movement. Contacts the tRNAs in the A and P-sites. The protein is Small ribosomal subunit protein uS13 of Streptococcus uberis (strain ATCC BAA-854 / 0140J).